The sequence spans 373 residues: Leucine aminopeptidase 1 (373 aa).

A signal peptide spans 1–18 (MKLLSVLALSATASSVLG). Positions 19 to 75 (ASIPVDTRAEKFLIELAPGETRWVTEEEKWALKESGQDFFDITDEEVGFTAAVAQPA) are excised as a propeptide. Residues H176 and D195 each contribute to the Zn(2+) site. The N-linked (GlcNAc...) asparagine glycan is linked to N196. The Zn(2+) site is built by E234 and D261. N288 carries N-linked (GlcNAc...) asparagine glycosylation. An intrachain disulfide couples C310 to C314. Zn(2+) is bound at residue H343. N-linked (GlcNAc...) asparagine glycosylation is present at N348.

Belongs to the peptidase M28 family. M28E subfamily. Monomer. The cofactor is Zn(2+).

Its subcellular location is the secreted. Functionally, extracellular aminopeptidase that allows assimilation of proteinaceous substrates. The protein is Leucine aminopeptidase 1 (LAP1) of Arthroderma gypseum (strain ATCC MYA-4604 / CBS 118893) (Microsporum gypseum).